Reading from the N-terminus, the 145-residue chain is Large ribosomal subunit protein uL13 (145 aa).

Belongs to the universal ribosomal protein uL13 family. In terms of assembly, part of the 50S ribosomal subunit.

In terms of biological role, this protein is one of the early assembly proteins of the 50S ribosomal subunit, although it is not seen to bind rRNA by itself. It is important during the early stages of 50S assembly. This is Large ribosomal subunit protein uL13 from Listeria monocytogenes serotype 4b (strain CLIP80459).